We begin with the raw amino-acid sequence, 467 residues long: Glutamate--tRNA ligase (467 aa).

The 'HIGH' region motif lies at 13 to 23; the sequence is PSPTGYLHVGG. The 'KMSKS' region motif lies at 245–249; it reads KLSKR. Position 248 (Lys248) interacts with ATP.

This sequence belongs to the class-I aminoacyl-tRNA synthetase family. Glutamate--tRNA ligase type 1 subfamily. Monomer.

The protein localises to the cytoplasm. The enzyme catalyses tRNA(Glu) + L-glutamate + ATP = L-glutamyl-tRNA(Glu) + AMP + diphosphate. Functionally, catalyzes the attachment of glutamate to tRNA(Glu) in a two-step reaction: glutamate is first activated by ATP to form Glu-AMP and then transferred to the acceptor end of tRNA(Glu). The polypeptide is Glutamate--tRNA ligase (Herminiimonas arsenicoxydans).